A 145-amino-acid chain; its full sequence is D-aminoacyl-tRNA deacylase (145 aa).

The short motif at 137–138 (GP) is the Gly-cisPro motif, important for rejection of L-amino acids element.

Belongs to the DTD family. Homodimer.

It localises to the cytoplasm. It catalyses the reaction glycyl-tRNA(Ala) + H2O = tRNA(Ala) + glycine + H(+). It carries out the reaction a D-aminoacyl-tRNA + H2O = a tRNA + a D-alpha-amino acid + H(+). In terms of biological role, an aminoacyl-tRNA editing enzyme that deacylates mischarged D-aminoacyl-tRNAs. Also deacylates mischarged glycyl-tRNA(Ala), protecting cells against glycine mischarging by AlaRS. Acts via tRNA-based rather than protein-based catalysis; rejects L-amino acids rather than detecting D-amino acids in the active site. By recycling D-aminoacyl-tRNA to D-amino acids and free tRNA molecules, this enzyme counteracts the toxicity associated with the formation of D-aminoacyl-tRNA entities in vivo and helps enforce protein L-homochirality. The protein is D-aminoacyl-tRNA deacylase of Lactobacillus acidophilus (strain ATCC 700396 / NCK56 / N2 / NCFM).